A 321-amino-acid chain; its full sequence is High osmolarity signaling protein SHO1A (321 aa).

Residues 1 to 28 (MDYNNNRYGGGGGGSKFNLGHIVGDPFS) are Cytoplasmic-facing. A helical membrane pass occupies residues 29–49 (LATIAIATAGWLIAFVSSIIA). Over 50 to 58 (NIDQEYPNY) the chain is Extracellular. Asn-57 is a glycosylation site (N-linked (GlcNAc...) asparagine). A helical transmembrane segment spans residues 59-79 (SWWALAYMFFVILGVTFAVAA). Position 80 (Asn-80) is a topological domain, cytoplasmic. The chain crosses the membrane as a helical span at residues 81–101 (AVYTYHVAMVGFLAAGLVFTT). The Extracellular segment spans residues 102–116 (SSVNSLIYWSDKAKQ). The chain crosses the membrane as a helical span at residues 117–137 (AAAAGFILLSMVSIVWIFYFG). The Cytoplasmic segment spans residues 138-321 (SQPTASHRQT…IAPSNYLILL (184 aa)). 2 disordered regions span residues 155-181 (KDHA…AQHP) and 194-261 (TSSP…QQPT). 2 stretches are compositionally biased toward polar residues: residues 165–181 (HMTQ…AQHP) and 225–237 (NFSN…PITS). The segment covering 238–249 (QNNPQNQHQQPQ) has biased composition (low complexity). A compositionally biased stretch (polar residues) spans 250 to 261 (DLTSPSTTQQPT). Residues 262–321 (EYPYRAKAIYSYEANPDDANEISFNKHEILEVSDVSGRWWQAKKENGETGIAPSNYLILL) enclose the SH3 domain.

Belongs to the SHO1 family. In terms of assembly, forms homooligomers.

The protein resides in the cell membrane. Its function is as follows. Plasma membrane osmosensor that activates the high osmolarity glycerol (HOG) MAPK signaling pathway in response to high osmolarity. The sequence is that of High osmolarity signaling protein SHO1A (SHO1A) from Hortaea werneckii.